A 498-amino-acid chain; its full sequence is Glycerol kinase (498 aa).

An ADP-binding site is contributed by Thr-12. The ATP site is built by Thr-12, Thr-13, and Ser-14. Thr-12 is a sn-glycerol 3-phosphate binding site. Arg-16 serves as a coordination point for ADP. Residues Arg-82, Tyr-134, and Asp-243 each coordinate sn-glycerol 3-phosphate. Glycerol is bound by residues Arg-82, Tyr-134, Asp-243, and Gln-244. ADP is bound by residues Thr-265 and Gly-308. 4 residues coordinate ATP: Thr-265, Gly-308, Gln-312, and Gly-411. Gly-411 contributes to the ADP binding site.

This sequence belongs to the FGGY kinase family.

The catalysed reaction is glycerol + ATP = sn-glycerol 3-phosphate + ADP + H(+). It functions in the pathway polyol metabolism; glycerol degradation via glycerol kinase pathway; sn-glycerol 3-phosphate from glycerol: step 1/1. Inhibited by fructose 1,6-bisphosphate (FBP). Functionally, key enzyme in the regulation of glycerol uptake and metabolism. Catalyzes the phosphorylation of glycerol to yield sn-glycerol 3-phosphate. The sequence is that of Glycerol kinase from Brucella suis (strain ATCC 23445 / NCTC 10510).